Consider the following 552-residue polypeptide: Putative lipase ATG15 (552 aa).

Residues 1–26 are Cytoplasmic-facing; the sequence is MLHITEKEQTRGLRQLEKRGKRLLPP. The chain crosses the membrane as a helical; Signal-anchor for type II membrane protein span at residues 27-49; that stretch reads LIKFIWFCLISAACVAATTFYWL. Residues 50–552 are Lumenal-facing; sequence RLSPVHNIHK…WRFVSHDDKE (503 aa). N-linked (GlcNAc...) asparagine glycans are attached at residues Asn63, Asn147, Asn239, Asn307, and Asn391. Ser409 serves as the catalytic Charge relay system. N-linked (GlcNAc...) asparagine glycosylation occurs at Asn526.

This sequence belongs to the AB hydrolase superfamily. Lipase family. As to quaternary structure, binds to both phosphatidylinositol (PI) and phosphatidylinositol 3,5-bisphosphate (PIP2).

It is found in the endosome. It localises to the multivesicular body membrane. The protein localises to the prevacuolar compartment membrane. It carries out the reaction a triacylglycerol + H2O = a diacylglycerol + a fatty acid + H(+). Lipase which is essential for lysis of subvacuolar cytoplasm to vacuole targeted bodies and intravacuolar autophagic bodies. Involved in the lysis of intravacuolar multivesicular body (MVB) vesicles. The intravacuolar membrane disintegration by ATG15 is critical to life span extension. In Lodderomyces elongisporus (strain ATCC 11503 / CBS 2605 / JCM 1781 / NBRC 1676 / NRRL YB-4239) (Yeast), this protein is Putative lipase ATG15 (ATG15).